The following is a 372-amino-acid chain: Protein phosphatase Mn(2+)-dependent 1K (372 aa).

Residues M1–Q29 constitute a mitochondrion transit peptide. Residues K46 to W61 form a critical for association with the BCKDH complex region. The PPM-type phosphatase domain maps to N94–F346. Residues D127 and G128 each coordinate Mn(2+). Position 248 is a phosphoserine (S248). Positions 298 and 337 each coordinate Mn(2+).

The protein belongs to the PP2C family. In terms of assembly, monomer. Interacts with E1 and E2 components of the branched-chain alpha-ketoacid dehydrogenase (BCKDH) complex; this interaction requires colocalization in mitochondria. Interacts with BCKDHA but not with BCKDHB of the E1 component. Interacts with the 24-meric E2 core composed of DBT monomers with a 24:1 stoichiometry; the N-terminal region (residues 49-61) of PPM1K and C-terminal linker of the lipoyl domain of DBT (residues 145-160) are critical for this interaction, whereas the lipoyl prosthetic group is dispensable. Competes with BCKDK for binding to the E2 core; this interaction is modulated by branched-chain alpha-keto acids. At steady state, BCKDH holoenzyme preferentially binds BCKDK and BCKDHA is phosphorylated. In response to high levels of branched-chain alpha-keto acids, the inhibitory BCKDK is replaced by activating PPM1K leading to BCKDHA dephosphorylation and BCAA degradation. It depends on Mn(2+) as a cofactor.

The protein localises to the mitochondrion matrix. It catalyses the reaction O-phospho-L-seryl-[3-methyl-2-oxobutanoate dehydrogenase] + H2O = L-seryl-[3-methyl-2-oxobutanoate dehydrogenase] + phosphate. The enzyme catalyses O-phospho-L-seryl-[protein] + H2O = L-seryl-[protein] + phosphate. It functions in the pathway protein modification. Functionally, serine/threonine-protein phosphatase component of macronutrients metabolism. Forms a functional kinase and phosphatase pair with BCKDK, serving as a metabolic regulatory node that coordinates branched-chain amino acids (BCAAs) with glucose and lipid metabolism via two distinct phosphoprotein targets: mitochondrial BCKDHA subunit of the branched-chain alpha-ketoacid dehydrogenase (BCKDH) complex and cytosolic ACLY, a lipogenic enzyme of Krebs cycle. At high levels of branched-chain ketoacids, dephosphorylates and activates mitochondrial BCKDH complex, a multisubunit complex consisting of three multimeric components each involved in different steps of BCAA catabolism: E1 composed of BCKDHA and BCKDHB, E2 core composed of DBT monomers, and E3 composed of DLD monomers. Tightly associates with the E2 component of BCKDH complex and dephosphorylates BCKDHA on Ser-347. Regulates the reversible phosphorylation of ACLY in response to changes in cellular carbohydrate abundance such as occurs during fasting to feeding metabolic transition. At fasting state, appears to dephosphorylate ACLY on Ser-455 and inactivate it. Refeeding stimulates MLXIPL/ChREBP transcription factor, leading to increased BCKDK to PPM1K expression ratio, phosphorylation and activation of ACLY that ultimately results in the generation of malonyl-CoA and oxaloacetate immediate substrates of de novo lipogenesis and gluconeogenesis, respectively. Recognizes phosphosites having SxS or RxxS motifs and strictly depends on Mn(2+) ions for the phosphatase activity. Regulates Ca(2+)-induced opening of mitochondrial transition pore and apoptotic cell death. This chain is Protein phosphatase Mn(2+)-dependent 1K (PPM1K), found in Bos taurus (Bovine).